The primary structure comprises 367 residues: Pre-small/secreted glycoprotein (367 aa).

A signal peptide spans 1 to 33; that stretch reads MGSGYQLLQLPRERFRKTSFLVWVIILFQRAIS. A glycan (N-linked (GlcNAc...) asparagine; by host) is linked at Asn41. 2 disulfides stabilise this stretch: Cys109–Cys136 and Cys122–Cys148. N-linked (GlcNAc...) asparagine; by host glycosylation is found at Asn205, Asn229, Asn239, Asn258, and Asn269.

Belongs to the filoviruses glycoprotein family. Homodimer; disulfide-linked. The homodimers are linked by two disulfide bonds in a parallel orientation. In terms of assembly, monomer. Post-translationally, this precursor is processed into mature sGP and delta-peptide by host furin or furin-like proteases. The cleavage site corresponds to the furin optimal cleavage sequence [KR]-X-[KR]-R. N-glycosylated. In terms of processing, O-glycosylated.

Its subcellular location is the secreted. Functionally, seems to possess an anti-inflammatory activity as it can reverse the barrier-decreasing effects of TNF alpha. Might therefore contribute to the lack of inflammatory reaction seen during infection in spite the of extensive necrosis and massive virus production. Does not seem to be involved in activation of primary macrophages. Does not seem to interact specifically with neutrophils. In terms of biological role, viroporin that permeabilizes mammalian cell plasma membranes. It acts by altering permeation of ionic compounds and small molecules. This activity may lead to viral enterotoxic activity. The sequence is that of Pre-small/secreted glycoprotein (GP) from Epomops franqueti (Franquet's epauletted fruit bat).